The primary structure comprises 210 residues: CLAVATA3/ESR (CLE)-related protein 4A-3 (210 aa).

The signal sequence occupies residues 1-21 (MAKNAMLCLLILRVVLALAFA). Residues 21-83 (ATNKKGDEEP…SNQLPNNNWM (63 aa)) form a required for secretion from the host cytoplasm to the host apoplasm region. Residue asparagine 32 is glycosylated (N-linked (GlcNAc...) asparagine). Residues 116–210 (RKTGMHSQRH…APAGPDPIHH (95 aa)) are disordered. Composition is skewed to basic and acidic residues over residues 125 to 137 (HHEE…EKRV) and 144 to 200 (PIHH…EKRG). An A-1 repeat occupies 127-135 (EETTLEQEK). The interval 127-198 (EETTLEQEKR…HEDTTLEQEK (72 aa)) is 4 X approximate repeat A. The stretch at 136-147 (RVAGAGPDPIHH) is one CLE-1 repeat. Positions 136–210 (RVAGAGPDPI…APAGPDPIHH (75 aa)) are 4 X approximate repeat CLE. One copy of the A-2 repeat lies at 148-156 (QDTTLEQEK). The stretch at 157-168 (RAVPAGPDPKHH) is one CLE-2 repeat. The stretch at 169–177 (EETTLEQEK) is one A-3 repeat. Residues 178-189 (RAVPAGPDPKHH) form a CLE-3 repeat. The A-4 repeat unit spans residues 190-198 (EDTTLEQEK). The CLE-4 repeat unit spans residues 199–210 (RGAPAGPDPIHH).

It belongs to the CLV3/ESR signal peptide family. In terms of tissue distribution, highly expressed exclusively within the dorsal esophageal gland cell during syncytium formation in host plants.

It is found in the secreted. The protein resides in the host cytoplasm. The protein localises to the host extracellular space. It localises to the extracellular space. Its subcellular location is the apoplast. Its function is as follows. Mimics host plant CLE extracellular signal peptides that regulate cell fate. May play a role in the differentiation or division of feeding cells (syncytia) induced in plant roots during infection. In Globodera rostochiensis (Golden nematode worm), this protein is CLAVATA3/ESR (CLE)-related protein 4A-3 (CLE-4A-3).